Reading from the N-terminus, the 98-residue chain is Glutaredoxin 1 (98 aa).

A Glutaredoxin domain is found at 1–98 (MNKAILHAII…KLLEGQPKKD (98 aa)). Cys-17 and Cys-20 are oxidised to a cystine.

Belongs to the glutaredoxin family. As to quaternary structure, monomer.

It is found in the cytoplasm. Functionally, has a glutathione-disulfide oxidoreductase activity in the presence of NADPH and glutathione reductase. Reduces low molecular weight disulfides and proteins. The protein is Glutaredoxin 1 (grxC1) of Rickettsia bellii (strain RML369-C).